The primary structure comprises 315 residues: MILILHPLENLKSYISSRPPLVIFMVSVSGMAIAFLTLGYFFKMKEIKSPEMTEDWNTFLLRFNNLDLCVSENETLKHFLNETTPPESTVTSGQARSSTQTPQALEDSGPINISVAITLTLDPLKPFGGYSRNITHLSSTIFGHQIGLSGRDSHEEMNITFTLPAAWNSDDCIVHGHCEQVVFTTCMTVTAASSVFPVTVQPPHCIPETYSNASLWYKIFTTARDSGTKYAQDYNPFWCYKGAVGKVYHALNPKLTVIVPEDDRSLINLHLMDTSYFLFVMVITMFCYAVIRGRPSKLRQSNSEFSPEKVALSDA.

A helical transmembrane segment spans residues 22 to 42; it reads VIFMVSVSGMAIAFLTLGYFF. Over residues 82–103 the composition is skewed to polar residues; the sequence is ETTPPESTVTSGQARSSTQTPQ. A disordered region spans residues 82 to 106; sequence ETTPPESTVTSGQARSSTQTPQALE. The next 2 membrane-spanning stretches (helical) occupy residues 180–200 and 271–291; these read QVVFTTCMTVTAASSVFPVTV and LMDTSYFLFVMVITMFCYAVI.

It belongs to the TMEM248 family.

It localises to the membrane. This is Transmembrane protein 248 (tmem248) from Xenopus tropicalis (Western clawed frog).